The following is a 211-amino-acid chain: Arginine exporter protein ArgO (211 aa).

6 consecutive transmembrane segments (helical) span residues 1 to 21 (MISY…PLGP), 37 to 57 (LMIA…GIFG), 68 to 88 (LLAL…FGAL), 111 to 131 (IIAT…DTFV), 147 to 167 (WFAL…ALLA), and 179 to 199 (AQRI…FQLA).

The protein belongs to the LysE/ArgO transporter (TC 2.A.75) family.

It localises to the cell inner membrane. It catalyses the reaction L-arginine(in) = L-arginine(out). In terms of biological role, involved in the export of arginine. Important to control the intracellular level of arginine and the correct balance between arginine and lysine. This chain is Arginine exporter protein ArgO, found in Salmonella paratyphi C (strain RKS4594).